We begin with the raw amino-acid sequence, 219 residues long: Probable transcription factor At1g55950 (219 aa).

Residues Ala9 to Gly77 form a disordered region. Residues Met17–Cys30 are compositionally biased toward basic residues. A compositionally biased stretch (basic and acidic residues) spans Leu31 to Pro48. The segment covering Tyr65–Gly77 has biased composition (acidic residues).

This sequence belongs to the GeBP family.

The polypeptide is Probable transcription factor At1g55950 (Arabidopsis thaliana (Mouse-ear cress)).